A 416-amino-acid chain; its full sequence is Multifunctional CCA protein (416 aa).

Residues glycine 8 and arginine 11 each contribute to the ATP site. CTP-binding residues include glycine 8 and arginine 11. Mg(2+) is bound by residues aspartate 21 and aspartate 23. Residues arginine 91, arginine 137, and arginine 140 each coordinate ATP. The CTP site is built by arginine 91, arginine 137, and arginine 140. Positions threonine 228–tryptophan 329 constitute an HD domain.

Belongs to the tRNA nucleotidyltransferase/poly(A) polymerase family. Bacterial CCA-adding enzyme type 1 subfamily. Monomer. Can also form homodimers and oligomers. It depends on Mg(2+) as a cofactor. Ni(2+) serves as cofactor.

It carries out the reaction a tRNA precursor + 2 CTP + ATP = a tRNA with a 3' CCA end + 3 diphosphate. The catalysed reaction is a tRNA with a 3' CCA end + 2 CTP + ATP = a tRNA with a 3' CCACCA end + 3 diphosphate. Catalyzes the addition and repair of the essential 3'-terminal CCA sequence in tRNAs without using a nucleic acid template. Adds these three nucleotides in the order of C, C, and A to the tRNA nucleotide-73, using CTP and ATP as substrates and producing inorganic pyrophosphate. tRNA 3'-terminal CCA addition is required both for tRNA processing and repair. Also involved in tRNA surveillance by mediating tandem CCA addition to generate a CCACCA at the 3' terminus of unstable tRNAs. While stable tRNAs receive only 3'-terminal CCA, unstable tRNAs are marked with CCACCA and rapidly degraded. The sequence is that of Multifunctional CCA protein from Shewanella sp. (strain MR-7).